We begin with the raw amino-acid sequence, 506 residues long: MVVYNLNRGIGWASSGVEYAQAYRSEVFRKLGVEAKFIFTDMFQNENIEHLTRNIGFEDNEIIWLYTFFTDLTIAATSYSLQQLKESFSLPIDRTEKNGKIISFFFKGSSIVVTVMLNDESSNIVQRVEYLMGGKLVRKDYYSYTKMFSEYYAPEDIGPCLYQRTFYNEDGSVAYEENVDGENSIFKFKETILYSKEELVGYMLEKLQLTNSDLILLDRSTGIGQAVLRNKGNAKVAVVVHAEHYNVSATDETTILWNNYYDYQFSNADSIDAFITSTETQTKTLIDQFKKYLNIEPVVYTIPVGSLSKLQRKEWHERKAFSLLTCSRLASEKHIDWLINAVVEANKVIPELTFDIYGEGGERQKLQEIIAKNKANNYIRLMGHKNLSSVYKDYQVYLSGSTSEGFGLTLMEAIGSGLPIIGLDVPYGNQTFIENNLNGYLIPRETPDNPQQISTAFAQYIVALFNSKDICKKHEYSYRIASRFLNDKIIENWSFFLRRLLNDYTI.

16 to 19 provides a ligand contact to UDP; that stretch reads GVEY. Histidine 241 is an N-acetyl-D-glucosamine binding site. 384–385 is a binding site for UDP; it reads HK. 404–407 is a binding site for N-acetyl-D-glucosamine; sequence EGFG.

The protein belongs to the glycosyltransferase group 1 family. Glycosyltransferase 4 subfamily. Interacts with stabilizing protein GtfB (Gtf2), probably as a heterotetramer with 2 subunits each of GtfA and GtfB, part of the accessory SecA2/SecY2 protein translocation apparatus.

The protein resides in the cytoplasm. It is found in the cell membrane. The catalysed reaction is L-seryl-[protein] + UDP-N-acetyl-alpha-D-glucosamine = 3-O-[N-acetyl-alpha-D-glucosaminyl]-L-seryl-[protein] + UDP + H(+). It functions in the pathway protein modification; protein glycosylation. Its function is as follows. Required for polymorphic O-glycosylation of the serine-rich repeat protein Srr2. Catalyzes the first step in glycosylation by transferring N-acetylglucosamine from UDP-GlcNAc to serine residues of Srr2. Part of the accessory SecA2/SecY2 system specifically required to export serine-rich repeat proteins, probably Srr2 in this organism. The GtfA-GtfB (Gtf1-Gtf2 in this bacteria) complex adds GlcNAc from UDP-GlcNAc to Srr2 substrate. This subunit has low glycosyltransferase activity; GtfB enhances glycosyltransferase activity in vitro. Upon expression in S.parasanguis GtfA/GtfB restores expression of serine-rich repeat protein Fap1 and complements a biofilm formation defect. The chain is UDP-N-acetylglucosamine--peptide N-acetylglucosaminyltransferase GtfA subunit from Streptococcus agalactiae.